The following is a 227-amino-acid chain: Uridylate kinase (227 aa).

Residue 11–12 (GS) participates in ATP binding. A UMP-binding site is contributed by G45. 2 residues coordinate ATP: G46 and R50. Residues D67 and 114–120 (TEPGHTT) each bind UMP. T140, Y146, and D149 together coordinate ATP.

This sequence belongs to the UMP kinase family. In terms of assembly, homohexamer.

Its subcellular location is the cytoplasm. It catalyses the reaction UMP + ATP = UDP + ADP. Its pathway is pyrimidine metabolism; CTP biosynthesis via de novo pathway; UDP from UMP (UMPK route): step 1/1. Inhibited by UTP. In terms of biological role, catalyzes the reversible phosphorylation of UMP to UDP. In Thermoplasma volcanium (strain ATCC 51530 / DSM 4299 / JCM 9571 / NBRC 15438 / GSS1), this protein is Uridylate kinase.